The sequence spans 71 residues: Large ribosomal subunit protein bL31 (71 aa).

The Zn(2+) site is built by Cys-16, Cys-18, Cys-37, and Cys-40.

It belongs to the bacterial ribosomal protein bL31 family. Type A subfamily. Part of the 50S ribosomal subunit. It depends on Zn(2+) as a cofactor.

Binds the 23S rRNA. The protein is Large ribosomal subunit protein bL31 of Nitratidesulfovibrio vulgaris (strain ATCC 29579 / DSM 644 / CCUG 34227 / NCIMB 8303 / VKM B-1760 / Hildenborough) (Desulfovibrio vulgaris).